The chain runs to 79 residues: RNA-binding protein Hfq (79 aa).

The 61-residue stretch at 10-70 (DVFLNTVRKQ…ISTIMPGQPV (61 aa)) folds into the Sm domain.

This sequence belongs to the Hfq family. In terms of assembly, homohexamer.

Its function is as follows. RNA chaperone that binds small regulatory RNA (sRNAs) and mRNAs to facilitate mRNA translational regulation in response to envelope stress, environmental stress and changes in metabolite concentrations. Also binds with high specificity to tRNAs. The chain is RNA-binding protein Hfq from Bartonella tribocorum (strain CIP 105476 / IBS 506).